A 395-amino-acid chain; its full sequence is Xylose isomerase (395 aa).

Catalysis depends on residues His-54 and Asp-57. Residues Glu-181, Glu-217, His-220, Asp-245, Asp-255, Asp-257, and Asp-293 each contribute to the Mg(2+) site.

It belongs to the xylose isomerase family. Homotetramer. The cofactor is Mg(2+).

It localises to the cytoplasm. It catalyses the reaction alpha-D-xylose = alpha-D-xylulofuranose. This chain is Xylose isomerase, found in Pseudarthrobacter chlorophenolicus (strain ATCC 700700 / DSM 12829 / CIP 107037 / JCM 12360 / KCTC 9906 / NCIMB 13794 / A6) (Arthrobacter chlorophenolicus).